A 123-amino-acid polypeptide reads, in one-letter code: Large ribosomal subunit protein bL12 (123 aa).

Belongs to the bacterial ribosomal protein bL12 family. Homodimer. Part of the ribosomal stalk of the 50S ribosomal subunit. Forms a multimeric L10(L12)X complex, where L10 forms an elongated spine to which 2 to 4 L12 dimers bind in a sequential fashion. Binds GTP-bound translation factors.

Functionally, forms part of the ribosomal stalk which helps the ribosome interact with GTP-bound translation factors. Is thus essential for accurate translation. The chain is Large ribosomal subunit protein bL12 from Shewanella sp. (strain ANA-3).